The sequence spans 423 residues: Mannose-6-phosphate isomerase (423 aa).

A2 is modified (N-acetylalanine). Residues S102 and S108 each carry the phosphoserine modification. Residues Q110, H112, E137, and H276 each coordinate Zn(2+). Residue R295 is part of the active site.

The protein belongs to the mannose-6-phosphate isomerase type 1 family. Zn(2+) is required as a cofactor.

It is found in the cytoplasm. It catalyses the reaction D-mannose 6-phosphate = D-fructose 6-phosphate. Its pathway is nucleotide-sugar biosynthesis; GDP-alpha-D-mannose biosynthesis; alpha-D-mannose 1-phosphate from D-fructose 6-phosphate: step 1/2. Its function is as follows. Isomerase that catalyzes the interconversion of fructose-6-P and mannose-6-P and has a critical role in the supply of D-mannose derivatives required for many eukaryotic glycosylation reactions. The protein is Mannose-6-phosphate isomerase of Rattus norvegicus (Rat).